A 392-amino-acid chain; its full sequence is Acetyl-CoA acetyltransferase (392 aa).

Cysteine 89 acts as the Acyl-thioester intermediate in catalysis. Catalysis depends on proton acceptor residues histidine 348 and cysteine 378.

This sequence belongs to the thiolase-like superfamily. Thiolase family. Homotetramer.

The protein localises to the cytoplasm. The catalysed reaction is 2 acetyl-CoA = acetoacetyl-CoA + CoA. It participates in biopolymer metabolism; poly-(R)-3-hydroxybutanoate biosynthesis. Its pathway is metabolic intermediate biosynthesis; (R)-mevalonate biosynthesis; (R)-mevalonate from acetyl-CoA: step 1/3. The chain is Acetyl-CoA acetyltransferase from Shinella zoogloeoides (Crabtreella saccharophila).